A 369-amino-acid chain; its full sequence is Queuine tRNA-ribosyltransferase (369 aa).

D89 serves as the catalytic Proton acceptor. Substrate is bound by residues 89–93, D143, Q187, and G214; that span reads DSGGF. Residues 245–251 are RNA binding; that stretch reads GVGTPED. D264 functions as the Nucleophile in the catalytic mechanism. Residues 269–273 are RNA binding; important for wobble base 34 recognition; the sequence is TRNAR. Zn(2+) is bound by residues C302, C304, C307, and H333.

This sequence belongs to the queuine tRNA-ribosyltransferase family. Homodimer. Within each dimer, one monomer is responsible for RNA recognition and catalysis, while the other monomer binds to the replacement base PreQ1. It depends on Zn(2+) as a cofactor.

The catalysed reaction is 7-aminomethyl-7-carbaguanine + guanosine(34) in tRNA = 7-aminomethyl-7-carbaguanosine(34) in tRNA + guanine. The protein operates within tRNA modification; tRNA-queuosine biosynthesis. Its function is as follows. Catalyzes the base-exchange of a guanine (G) residue with the queuine precursor 7-aminomethyl-7-deazaguanine (PreQ1) at position 34 (anticodon wobble position) in tRNAs with GU(N) anticodons (tRNA-Asp, -Asn, -His and -Tyr). Catalysis occurs through a double-displacement mechanism. The nucleophile active site attacks the C1' of nucleotide 34 to detach the guanine base from the RNA, forming a covalent enzyme-RNA intermediate. The proton acceptor active site deprotonates the incoming PreQ1, allowing a nucleophilic attack on the C1' of the ribose to form the product. After dissociation, two additional enzymatic reactions on the tRNA convert PreQ1 to queuine (Q), resulting in the hypermodified nucleoside queuosine (7-(((4,5-cis-dihydroxy-2-cyclopenten-1-yl)amino)methyl)-7-deazaguanosine). This is Queuine tRNA-ribosyltransferase from Dechloromonas aromatica (strain RCB).